The following is a 325-amino-acid chain: MAALPVFIPAESFPSILSHETLINHFRTNLPKHSSTITSPVRQNYTVSSPSSLLLMPSWSSSSSLPYMGVKLVTYFPHNSSQNLPGIHGSYTLFSSTTGQTLATMDGTVLTLYRTSSVSGLGSKILARDDSQVLIMVGSGALAPHLIKSHLAAKPSLRRVIIWNRTPQRAQELAETLSKDPQHKEISFDSHDSLDQIIPLGDIISCATNSTVPLVKGEFLKPGTHLDLVGSFSHEMKECDDNAIQRGSVFVDNDTAMIEAGELAGAFERGVIKREDICGNLVELIKGDKEGRKSSTDITVFKSVGSGTVDLLTAQLVHETYLSRC.

The transit peptide at 1-42 (MAALPVFIPAESFPSILSHETLINHFRTNLPKHSSTITSPVR) directs the protein to the chloroplast.

This sequence belongs to the ornithine cyclodeaminase/mu-crystallin family.

The protein resides in the plastid. It is found in the chloroplast. Its function is as follows. Involved in the biosynthesis of pipecolate (Pip), a metabolite that orchestrates defense amplification, positive regulation of salicylic acid (SA) biosynthesis, and priming to guarantee effective local resistance induction and the establishment of systemic acquired resistance (SAR). Converts delta-(1)-piperideine-2-carboxylate (P2C) to Pip. Mediates reduction of P2C and biosynthesis of Pip in systemic tissue and contributes to SAR establishment. Does not possess ornithine cyclodeaminase activity in vitro. The chain is Protein SAR DEFICIENT 4 from Arabidopsis thaliana (Mouse-ear cress).